The following is a 109-amino-acid chain: uncharacterized protein (109 aa).

2 helical membrane-spanning segments follow: residues 24 to 44 (SLGI…SAFV) and 68 to 88 (VIVL…SIFI).

It localises to the membrane. This is an uncharacterized protein from Saccharomyces cerevisiae (strain ATCC 204508 / S288c) (Baker's yeast).